The chain runs to 112 residues: Thioredoxin (112 aa).

The Thioredoxin domain occupies serine 2–leucine 112. Residues cysteine 35 and cysteine 38 are joined by a disulfide bond.

This sequence belongs to the thioredoxin family.

In terms of biological role, participates in various redox reactions through the reversible oxidation of its active center dithiol to a disulfide and catalyzes dithiol-disulfide exchange reactions. In Mycolicibacterium smegmatis (Mycobacterium smegmatis), this protein is Thioredoxin (trxA).